Reading from the N-terminus, the 496-residue chain is Aspartyl/glutamyl-tRNA(Asn/Gln) amidotransferase subunit B (496 aa).

This sequence belongs to the GatB/GatE family. GatB subfamily. As to quaternary structure, heterotrimer of A, B and C subunits.

It carries out the reaction L-glutamyl-tRNA(Gln) + L-glutamine + ATP + H2O = L-glutaminyl-tRNA(Gln) + L-glutamate + ADP + phosphate + H(+). The enzyme catalyses L-aspartyl-tRNA(Asn) + L-glutamine + ATP + H2O = L-asparaginyl-tRNA(Asn) + L-glutamate + ADP + phosphate + 2 H(+). Functionally, allows the formation of correctly charged Asn-tRNA(Asn) or Gln-tRNA(Gln) through the transamidation of misacylated Asp-tRNA(Asn) or Glu-tRNA(Gln) in organisms which lack either or both of asparaginyl-tRNA or glutaminyl-tRNA synthetases. The reaction takes place in the presence of glutamine and ATP through an activated phospho-Asp-tRNA(Asn) or phospho-Glu-tRNA(Gln). The sequence is that of Aspartyl/glutamyl-tRNA(Asn/Gln) amidotransferase subunit B from Picosynechococcus sp. (strain ATCC 27264 / PCC 7002 / PR-6) (Agmenellum quadruplicatum).